Consider the following 656-residue polypeptide: Protein sly1 homolog (656 aa).

A run of 4 repeats spans residues 85 to 121, 203 to 245, 419 to 456, and 460 to 496. Residues 85–496 form a 4 X approximate repeats region; it reads DENLDRIQQD…QATQYEGGGT (412 aa).

This sequence belongs to the STXBP/unc-18/SEC1 family.

It localises to the cytoplasm. The protein resides in the membrane. In terms of biological role, non-vital for development. The protein is Protein sly1 homolog (Slh) of Drosophila virilis (Fruit fly).